Consider the following 2340-residue polypeptide: Proto-oncogene tyrosine-protein kinase ROS (2340 aa).

A signal peptide spans 1–28 (MKNICWLTLKLVKFVVLGCIIWISVAQS). Topologically, residues 29–1854 (TVLSSCLTSC…EDGVWITETS (1826 aa)) are extracellular. A glycan (N-linked (GlcNAc...) asparagine) is linked at N53. Fibronectin type-III domains are found at residues 111-206 (LPTA…VPET) and 207-295 (APLI…PSPS). Residues N334 and N362 are each glycosylated (N-linked (GlcNAc...) asparagine). One can recognise a Fibronectin type-III 3 domain in the interval 567 to 667 (LPGHPQEVSV…APSVGTTLVP (101 aa)). N-linked (GlcNAc...) asparagine glycosylation is found at N935 and N1011. Fibronectin type-III domains lie at 943–1038 (IPDP…SVPS) and 1039–1146 (APEN…TSEI). A glycan (N-linked (GlcNAc...) asparagine) is linked at N1243. Fibronectin type-III domains follow at residues 1442–1549 (ASDM…TKSG), 1550–1649 (VPGA…VNMF), 1651–1744 (TPEK…TKAG), and 1745–1846 (VPSK…LVED). N-linked (GlcNAc...) asparagine glycosylation is present at N1676. The chain crosses the membrane as a helical span at residues 1855-1875 (FILTIIVGIFLVATVPLTFVW). Residues 1876-2340 (HRSLKSHKAS…AHSEHGDVSE (465 aa)) are Cytoplasmic-facing. In terms of domain architecture, Protein kinase spans 1938-2216 (LSLRLLLGSG…QLQLFRNVFL (279 aa)). ATP is bound by residues 1944 to 1952 (LGSGAFGEV) and K1973. D2072 functions as the Proton acceptor in the catalytic mechanism. Residues Y2267 and Y2327 each carry the phosphotyrosine; by autocatalysis modification.

Belongs to the protein kinase superfamily. Tyr protein kinase family. Insulin receptor subfamily. Interacts with PTPN11; may activate the PI3 kinase-mTOR signaling pathway. Interacts with VAV3; constitutive interaction mediating VAV3 phosphorylation. Interacts with PTPN6 (via SH2 1 domain); the interaction is direct and promotes ROS1 dephosphorylation. Post-translationally, phosphorylated. Probably autophosphorylates. Phosphorylation at Tyr-2267 and/or Tyr-2327 recruits PTPN11. Phosphorylation at Tyr-2267 is required for the interaction with PTPN6 that mediates ROS1 dephosphorylation. Phosphorylation at Tyr-2267 stimulates the kinase activity and the activation of the ERK1 signaling cascade. As to expression, expressed by epithelial cells of the caput epididymis (at protein level).

Its subcellular location is the cell membrane. The enzyme catalyses L-tyrosyl-[protein] + ATP = O-phospho-L-tyrosyl-[protein] + ADP + H(+). Inhibited by dephosphorylation by PTPN6. Its function is as follows. Receptor tyrosine kinase (RTK) that plays a role in epithelial cell differentiation and regionalization of the proximal epididymal epithelium. NELL2 is an endogenous ligand for ROS1. Upon endogenous stimulation by NELL2, ROS1 activates the intracellular signaling pathway and triggers epididymal epithelial differentiation and subsequent sperm maturation. May activate several downstream signaling pathways related to cell differentiation, proliferation, growth and survival including the PI3 kinase-mTOR signaling pathway. Mediates the phosphorylation of PTPN11, an activator of this pathway. May also phosphorylate and activate the transcription factor STAT3 to control anchorage-independent cell growth. Mediates the phosphorylation and the activation of VAV3, a guanine nucleotide exchange factor regulating cell morphology. May activate other downstream signaling proteins including AKT1, MAPK1, MAPK3, IRS1, and PLCG2. This is Proto-oncogene tyrosine-protein kinase ROS (Ros1) from Mus musculus (Mouse).